Here is a 1070-residue protein sequence, read N- to C-terminus: Carbamoyl phosphate synthase large chain (1070 aa).

Positions 1-401 (MPKRDDIKTI…ALLKAVRSLE (401 aa)) are carboxyphosphate synthetic domain. 12 residues coordinate ATP: Arg-129, Arg-169, Gly-175, Gly-176, Lys-208, Ile-210, Glu-215, Gly-241, Ile-242, His-243, Gln-284, and Glu-298. An ATP-grasp 1 domain is found at 133-327 (RDLMNELGEP…IAKLAAKIAV (195 aa)). Residues Gln-284, Glu-298, and Asn-300 each coordinate Mg(2+). Residues Gln-284, Glu-298, and Asn-300 each coordinate Mn(2+). Residues 402-546 (IGADHLLLEE…YSTYEEENES (145 aa)) form an oligomerization domain region. A carbamoyl phosphate synthetic domain region spans residues 547–929 (TRSAKESVIV…ALYKGFVASG (383 aa)). The ATP-grasp 2 domain occupies 671-861 (EKALGILQIP…MANVATRVIL (191 aa)). Positions 707, 746, 748, 752, 777, 778, 779, 780, 820, and 832 each coordinate ATP. The Mg(2+) site is built by Gln-820, Glu-832, and Asn-834. 3 residues coordinate Mn(2+): Gln-820, Glu-832, and Asn-834. An MGS-like domain is found at 930-1070 (TTMHDYGTVL…SEVKQPKARV (141 aa)). Positions 930–1070 (TTMHDYGTVL…SEVKQPKARV (141 aa)) are allosteric domain.

Belongs to the CarB family. In terms of assembly, composed of two chains; the small (or glutamine) chain promotes the hydrolysis of glutamine to ammonia, which is used by the large (or ammonia) chain to synthesize carbamoyl phosphate. Tetramer of heterodimers (alpha,beta)4. It depends on Mg(2+) as a cofactor. Mn(2+) is required as a cofactor.

The enzyme catalyses hydrogencarbonate + L-glutamine + 2 ATP + H2O = carbamoyl phosphate + L-glutamate + 2 ADP + phosphate + 2 H(+). It catalyses the reaction hydrogencarbonate + NH4(+) + 2 ATP = carbamoyl phosphate + 2 ADP + phosphate + 2 H(+). The protein operates within amino-acid biosynthesis; L-arginine biosynthesis; carbamoyl phosphate from bicarbonate: step 1/1. It functions in the pathway pyrimidine metabolism; UMP biosynthesis via de novo pathway; (S)-dihydroorotate from bicarbonate: step 1/3. Its function is as follows. Large subunit of the glutamine-dependent carbamoyl phosphate synthetase (CPSase). CPSase catalyzes the formation of carbamoyl phosphate from the ammonia moiety of glutamine, carbonate, and phosphate donated by ATP, constituting the first step of 2 biosynthetic pathways, one leading to arginine and/or urea and the other to pyrimidine nucleotides. The large subunit (synthetase) binds the substrates ammonia (free or transferred from glutamine from the small subunit), hydrogencarbonate and ATP and carries out an ATP-coupled ligase reaction, activating hydrogencarbonate by forming carboxy phosphate which reacts with ammonia to form carbamoyl phosphate. This Listeria monocytogenes serotype 4b (strain CLIP80459) protein is Carbamoyl phosphate synthase large chain.